The chain runs to 289 residues: GTPase Era (289 aa).

The Era-type G domain maps to 2–167 (KSGFISLIGR…LDEIYKYLPE (166 aa)). Residues 10 to 17 (GRTNAGKS) are G1. 10–17 (GRTNAGKS) lines the GTP pocket. The segment at 36–40 (NATRR) is G2. A G3 region spans residues 57 to 60 (DTPG). Residues 57–61 (DTPGL) and 116–119 (TKID) each bind GTP. Residues 116 to 119 (TKID) form a G4 region. The interval 146 to 148 (LSV) is G5. The region spanning 198 to 274 (VSDEVPYSTD…FLKINVKIDK (77 aa)) is the KH type-2 domain.

Belongs to the TRAFAC class TrmE-Era-EngA-EngB-Septin-like GTPase superfamily. Era GTPase family. Monomer.

It localises to the cytoplasm. It is found in the cell inner membrane. Functionally, an essential GTPase that binds both GDP and GTP, with rapid nucleotide exchange. Plays a role in 16S rRNA processing and 30S ribosomal subunit biogenesis and possibly also in cell cycle regulation and energy metabolism. The sequence is that of GTPase Era from Campylobacter fetus subsp. fetus (strain 82-40).